The sequence spans 193 residues: uncharacterized protein (193 aa).

Residues 86–181 (TKQRELLEIL…QVEEVQAEVG (96 aa)) are a coiled coil.

This is an uncharacterized protein from Streptococcus pyogenes serotype M6 (strain ATCC BAA-946 / MGAS10394).